Consider the following 531-residue polypeptide: Cytochrome P450 monooxygenase ffsD (531 aa).

The chain crosses the membrane as a helical span at residues 40-60; it reads VGALLGISLSVVLLLWVISVV. C475 contributes to the heme binding site.

The protein belongs to the cytochrome P450 family. The cofactor is heme.

The protein resides in the membrane. Its pathway is mycotoxin biosynthesis. Functionally, cytochrome P450 monooxygenase; part of the gene cluster that mediates the biosynthesis of the cytotoxic leucine-containing cytochalasans, including aspochalasin C, aspochalasin E, TMC-169, flavichalasine F, aspergillin PZ, aspochalasin M and flavichalasine G. The first step in the pathway is catalyzed by the hybrid PKS-NRPS ffsA that utilizes 8 units of malonyl-CoA to iteratively assemble the octaketide chain before addition of L-leucine by the C-terminal NRPS modules. Because ffsA lacks a designated enoylreductase (ER) domain, the required activity is provided the enoyl reductase fssC. The methyltransferase (MT) domain of ffsA catalyzes the alpha-methylation at C10 and C14 using S-adenosyl-L-methionine as the methyl-donating cosubstrate. Reduction by the hydrolyase ffsE, followed by dehydration and intra-molecular Diels-Alder cyclization by the Diels-Alderase ffsF then yield the required isoindolone-fused macrocycle. A number of oxidative steps catalyzed by the tailoring cytochrome P450 monooxygenase ffsD, the FAD-linked oxidoreductase ffsJ and the short-chain dehydrogenase/reductase ffsI, are further required to afford the final products. The protein is Cytochrome P450 monooxygenase ffsD of Aspergillus flavipes.